The chain runs to 203 residues: Abscisic acid receptor PYL5 (203 aa).

Residues 1–18 are compositionally biased toward polar residues; the sequence is MRSPVQLQHGSDATNGFH. The tract at residues 1-29 is disordered; sequence MRSPVQLQHGSDATNGFHTLQPHDQTDGP. An START-like region spans residues 51 to 201; sequence HDVGPDQCCS…NLQSLARSTN (151 aa). Residues lysine 87, 117–122, 144–150, and glutamate 166 each bind abscisate; these read AVSSTE and RLKNYRS. The Gate loop signature appears at 113–117; it reads SGLPA. A Latch loop motif is present at residues 143-145; the sequence is HRL.

It belongs to the PYR/PYL/RCAR abscisic acid intracellular receptor family. Monomer. Homodimer. Binds ABA on one subunit only. Binds to CARs protein in an ABA-independent manner, both at the plasma membrane and in the nucleus. Binds both (-)-ABA and (+)-ABA. Interacts with HAB1, ABI1 and ABI2, and possibly with other PP2Cs.

It localises to the cytoplasm. The protein resides in the nucleus. Its subcellular location is the cell membrane. In terms of biological role, receptor for abscisic acid (ABA) required for ABA-mediated responses such as stomatal closure and germination inhibition. Inhibits the activity of group-A protein phosphatases type 2C (PP2Cs) in an ABA-independent manner but more efficiently when activated by ABA. Confers enhanced sensitivity to ABA. Can be activated by both (-)-ABA and (+)-ABA. The chain is Abscisic acid receptor PYL5 (PYL5) from Arabidopsis thaliana (Mouse-ear cress).